The following is a 637-amino-acid chain: Palmitoyltransferase Hip14 (637 aa).

The Cytoplasmic segment spans residues 1–295 (MYQSACQAAT…SKLRHDKRLR (295 aa)). ANK repeat units follow at residues 77-106 (ETVT…TVDA), 111-140 (LNAT…DPRI), 144-173 (EGCS…DPDL), 177-207 (GGMT…NPAM), and 212-242 (HGNT…SLDV). A helical transmembrane segment spans residues 296-315 (WWSMVACPFTAFYLAGIVFT). Residues 316 to 318 (VNT) are Lumenal-facing. The helical transmembrane segment at 319–341 (LYIIKFFLLGCLYSIFHTIGKAL) threads the bilayer. Residues 342 to 345 (FDEH) are Cytoplasmic-facing. Residues 346-366 (LMALLPLSVYLATKAWFYVTW) traverse the membrane as a helical segment. Residues 367–373 (LMYIDDA) lie on the Lumenal side of the membrane. The helical transmembrane segment at 374 to 394 (VSFTATVCFLISSLLLWVCFL) threads the bilayer. Topologically, residues 395 to 472 (KSWKGDPGII…VGNCIGLKNH (78 aa)) are cytoplasmic. Positions 430–480 (SFCSGCLVRRPIRSKHCSVCDRCVARFDHHCPWVGNCIGLKNHSYFMGFLW) constitute a DHHC domain. The active-site S-palmitoyl cysteine intermediate is Cys460. Residues 473 to 493 (SYFMGFLWMLLIMCAWMLYGG) traverse the membrane as a helical segment. Over 494 to 520 (SKYYVNQCNVRFDDFLGAMRAIGNCDA) the chain is Lumenal. Residues 521 to 541 (WVGWVMGNALLHMSWVILLTI) form a helical membrane-spanning segment. At 542–637 (CQTYQVICLG…DGMAGDHQYV (96 aa)) the chain is on the cytoplasmic side.

This sequence belongs to the DHHC palmitoyltransferase family. AKR/ZDHHC17 subfamily. As to quaternary structure, interacts with dorsal-ventral patterning protein Sog. In terms of tissue distribution, in stage 13-15 embryos, expressed in the central nervous system. At the third instar larval stage, expressed in the ventral nerve cord and is enriched in the neuropil.

The protein resides in the golgi apparatus membrane. It is found in the presynaptic cell membrane. It carries out the reaction L-cysteinyl-[protein] + hexadecanoyl-CoA = S-hexadecanoyl-L-cysteinyl-[protein] + CoA. Probable palmitoyltransferase which is required for photoreceptor synaptic transmission and for the correct expression and localization of palmitoylated protein Csp and synaptosomal-associated protein Snap25. Probably palmitoylates Csp. Probably also palmitoylates the dorsal-ventral patterning protein Sog and promotes its secretion and activity and the stabilization of the membrane-bound form. Required for synaptic vesicle exocytosis. The polypeptide is Palmitoyltransferase Hip14 (Drosophila melanogaster (Fruit fly)).